Reading from the N-terminus, the 433-residue chain is ATP-dependent RNA helicase SUB2 (433 aa).

Residues 1–17 show a composition bias toward acidic residues; that stretch reads MSAENQEELLDYSDSEE. Residues 1-39 are disordered; that stretch reads MSAENQEELLDYSDSEEIAVPTTTQAGEGESANDKEADK. Residues 49-77 carry the Q motif motif; it reads TGFRDFLLKPELLRAIGDCGFEHPSEVQQ. One can recognise a Helicase ATP-binding domain in the interval 80-255; sequence IPQSILGTDV…KKFMQNPLEI (176 aa). Residue 93–100 participates in ATP binding; sequence AKSGLGKT. Residues 202-205 carry the DEAD box motif; the sequence is DECD. The Helicase C-terminal domain maps to 267–428; the sequence is GLQQYYIKLE…EFPEEGVDPS (162 aa).

This sequence belongs to the DEAD box helicase family. DECD subfamily.

It is found in the nucleus. The enzyme catalyses ATP + H2O = ADP + phosphate + H(+). Functionally, ATP-binding RNA helicase involved in transcription elongation and required for the export of mRNA out of the nucleus. SUB2 also plays a role in pre-mRNA splicing and spliceosome assembly. May be involved in rDNA and telomeric silencing, and maintenance of genome integrity. The chain is ATP-dependent RNA helicase SUB2 (SUB2) from Lodderomyces elongisporus (strain ATCC 11503 / CBS 2605 / JCM 1781 / NBRC 1676 / NRRL YB-4239) (Yeast).